We begin with the raw amino-acid sequence, 79 residues long: Cyclin-dependent kinases regulatory subunit 2 (79 aa).

Lys-4 is modified (N6-acetyllysine).

It belongs to the CKS family. Forms a homohexamer that can probably bind six kinase subunits.

Its function is as follows. Binds to the catalytic subunit of the cyclin dependent kinases and is essential for their biological function. In Bos taurus (Bovine), this protein is Cyclin-dependent kinases regulatory subunit 2 (CKS2).